A 697-amino-acid polypeptide reads, in one-letter code: Putative flagellar export/assembly protein LfhA (697 aa).

7 helical membrane passes run 19–39, 40–60, 66–86, 116–136, 204–224, 242–262, and 280–302; these read VPLV…PALL, DILF…AVSA, FSLF…LNVA, GNFV…FIVV, AIAG…IGIF, IGDG…AAII, and LLAS…VVPG.

This sequence belongs to the FHIPEP (flagella/HR/invasion proteins export pore) family.

Its subcellular location is the cell inner membrane. In terms of biological role, part of the flagellar gene cluster Flag-2. However, the Flag-2 flagellar system could be inactive in strain 042 due to a frameshift in lfgC. The protein is Putative flagellar export/assembly protein LfhA of Escherichia coli O44:H18 (strain 042 / EAEC).